A 262-amino-acid chain; its full sequence is Probable proteasome subunit beta type-7 (262 aa).

It belongs to the peptidase T1B family. The 26S proteasome consists of a 20S proteasome core and two 19S regulatory subunits. The 20S proteasome core is composed of 28 subunits that are arranged in four stacked rings, resulting in a barrel-shaped structure. The two end rings are each formed by seven alpha subunits, and the two central rings are each formed by seven beta subunits. The catalytic chamber with the active sites is on the inside of the barrel.

Its subcellular location is the cytoplasm. It localises to the nucleus. Functionally, non-catalytic component of the proteasome, a multicatalytic proteinase complex which is characterized by its ability to cleave peptides with Arg, Phe, Tyr, Leu, and Glu adjacent to the leaving group at neutral or slightly basic pH. The proteasome has an ATP-dependent proteolytic activity. This Schizosaccharomyces pombe (strain 972 / ATCC 24843) (Fission yeast) protein is Probable proteasome subunit beta type-7.